Consider the following 433-residue polypeptide: Signal recognition particle 54 kDa protein (433 aa).

Residues 106–113 (GVEGSGKT), 186–190 (DTAGR), and 244–247 (TKMD) contribute to the GTP site.

The protein belongs to the GTP-binding SRP family. SRP54 subfamily. Part of the signal recognition particle protein translocation system, which is composed of SRP and FtsY. Archaeal SRP consists of a 7S RNA molecule of 300 nucleotides and two protein subunits: SRP54 and SRP19.

The protein resides in the cytoplasm. It carries out the reaction GTP + H2O = GDP + phosphate + H(+). In terms of biological role, involved in targeting and insertion of nascent membrane proteins into the cytoplasmic membrane. Binds to the hydrophobic signal sequence of the ribosome-nascent chain (RNC) as it emerges from the ribosomes. The SRP-RNC complex is then targeted to the cytoplasmic membrane where it interacts with the SRP receptor FtsY. This is Signal recognition particle 54 kDa protein from Pyrobaculum islandicum (strain DSM 4184 / JCM 9189 / GEO3).